The chain runs to 333 residues: Olfactory receptor 9S13 (333 aa).

Residues 1 to 35 (MATAVHRNGSLTPVSLRVFVLVGFGGGALTQALLF) are Extracellular-facing. Asn8 carries an N-linked (GlcNAc...) asparagine glycan. A helical membrane pass occupies residues 36-56 (AVFLVLYVVTVLGNLTMIVVI). Over 57-72 (TLDARLHSPMYFFLKN) the chain is Cytoplasmic. The chain crosses the membrane as a helical span at residues 73 to 93 (LSFVDLCYSSAIAPNALANFL). Residues 94-106 (STSKVISFEACAT) lie on the Extracellular side of the membrane. The cysteines at positions 104 and 196 are disulfide-linked. A helical membrane pass occupies residues 107–127 (QFFFFSLLATTETFLLAVMAY). The Cytoplasmic segment spans residues 128–150 (DRFMAICSPLRYPVTMCPTTCTR). The helical transmembrane segment at 151–171 (LVLGTFCVGCLNSIVQTSLTF) threads the bilayer. Residues 172 to 203 (QLPFCSSNRIDHFYCDVPPLLQLACASTALNE) lie on the Extracellular side of the membrane. The chain crosses the membrane as a helical span at residues 204–224 (LFLFGLCGFIIVSTTLAVLVS). Residues 225–251 (YGYITVTILRMHSGSGRHKVFSTCGSH) are Cytoplasmic-facing. A helical transmembrane segment spans residues 252-272 (LTAVSLFYGTLFVMYAQPGAL). Residues 273-278 (TSMEQG) are Extracellular-facing. A helical membrane pass occupies residues 279–299 (KVVSIFYTLVIPMLNPLIYSL). At 300-333 (RNKDVKDALQRLGQRHSLVKAVRGCPAAGGNASV) the chain is on the cytoplasmic side.

It belongs to the G-protein coupled receptor 1 family.

It is found in the cell membrane. Its function is as follows. Odorant receptor. The protein is Olfactory receptor 9S13 of Mus musculus (Mouse).